The sequence spans 364 residues: Dihydroorotate dehydrogenase (quinone) (364 aa).

Residues 62-66 (AGFDK) and threonine 86 contribute to the FMN site. Lysine 66 serves as a coordination point for substrate. A substrate-binding site is contributed by 111–115 (NRMGF). Residues asparagine 142 and asparagine 175 each coordinate FMN. Asparagine 175 is a substrate binding site. Serine 178 acts as the Nucleophile in catalysis. Asparagine 180 provides a ligand contact to substrate. FMN is bound by residues lysine 216 and threonine 244. A substrate-binding site is contributed by 245-246 (NT). Residues glycine 267, glycine 296, and 317 to 318 (YT) each bind FMN.

It belongs to the dihydroorotate dehydrogenase family. Type 2 subfamily. In terms of assembly, monomer. FMN serves as cofactor.

It localises to the cell membrane. The catalysed reaction is (S)-dihydroorotate + a quinone = orotate + a quinol. It participates in pyrimidine metabolism; UMP biosynthesis via de novo pathway; orotate from (S)-dihydroorotate (quinone route): step 1/1. Its function is as follows. Catalyzes the conversion of dihydroorotate to orotate with quinone as electron acceptor. The sequence is that of Dihydroorotate dehydrogenase (quinone) from Anaeromyxobacter sp. (strain K).